The sequence spans 199 residues: Chaperone protein TorD (199 aa).

Belongs to the TorD/DmsD family. TorD subfamily.

The protein localises to the cytoplasm. In terms of biological role, involved in the biogenesis of TorA. Acts on TorA before the insertion of the molybdenum cofactor and, as a result, probably favors a conformation of the apoenzyme that is competent for acquiring the cofactor. In Escherichia coli (strain K12 / MC4100 / BW2952), this protein is Chaperone protein TorD.